The chain runs to 199 residues: Recombination protein RecR (199 aa).

The C4-type zinc finger occupies 57–72; it reads CEKCNNFTEEVVCELC. Residues 80–175 form the Toprim domain; it reads ALLCVVEMPA…KITRIARGLP (96 aa).

It belongs to the RecR family.

Functionally, may play a role in DNA repair. It seems to be involved in an RecBC-independent recombinational process of DNA repair. It may act with RecF and RecO. This is Recombination protein RecR from Nitrosospira multiformis (strain ATCC 25196 / NCIMB 11849 / C 71).